Here is a 252-residue protein sequence, read N- to C-terminus: Thiamine thiazole synthase (252 aa).

NAD(+) is bound by residues S35, 54–55, G62, V126, and 152–154; these read EK and HVD. Positions 154 and 169 each coordinate Fe cation. M217 is an NAD(+) binding site. Residue R227 coordinates glycine.

It belongs to the THI4 family. As to quaternary structure, homooctamer; tetramer of dimers. It depends on Fe(2+) as a cofactor.

It carries out the reaction hydrogen sulfide + glycine + NAD(+) = ADP-5-ethyl-4-methylthiazole-2-carboxylate + nicotinamide + 3 H2O + H(+). The protein operates within cofactor biosynthesis; thiamine diphosphate biosynthesis. Functionally, involved in the biosynthesis of the thiazole moiety of thiamine. Catalyzes the conversion of NAD and glycine to adenosine diphosphate 5-(2-hydroxyethyl)-4-methylthiazole-2-carboxylate (ADT), an adenylated thiazole intermediate, using free sulfide as a source of sulfur. This is Thiamine thiazole synthase from Pyrococcus furiosus (strain ATCC 43587 / DSM 3638 / JCM 8422 / Vc1).